The primary structure comprises 518 residues: 4-trimethylaminobutyraldehyde dehydrogenase B (518 aa).

NAD(+)-binding positions include K204 and 256–260 (GSVPT). The active-site Proton acceptor is the E278. C312 acts as the Nucleophile in catalysis. E415 lines the NAD(+) pocket.

The protein belongs to the aldehyde dehydrogenase family. As to quaternary structure, homotetramer.

Its subcellular location is the cytoplasm. It localises to the cytosol. The catalysed reaction is 4-(trimethylamino)butanal + NAD(+) + H2O = 4-(trimethylamino)butanoate + NADH + 2 H(+). The enzyme catalyses an aldehyde + NAD(+) + H2O = a carboxylate + NADH + 2 H(+). It participates in amine and polyamine biosynthesis; carnitine biosynthesis. Converts gamma-trimethylaminobutyraldehyde into gamma-butyrobetaine with high efficiency (in vitro). Can catalyze the irreversible oxidation of a broad range of aldehydes to the corresponding acids in an NAD-dependent reaction, but with low efficiency. In Danio rerio (Zebrafish), this protein is 4-trimethylaminobutyraldehyde dehydrogenase B (aldh9a1b).